The chain runs to 349 residues: Rhodopsin (349 aa).

The Extracellular portion of the chain corresponds to 1–33 (TEGPYFYIPMSNATGIVRSPYEYPQYYLVYPAA). Asn-12 is a glycosylation site (N-linked (GlcNAc...) asparagine). The helical transmembrane segment at 34 to 58 (YAVLGAYMFFLIIFGFPVNFLTLYV) threads the bilayer. The Cytoplasmic portion of the chain corresponds to 59-70 (TIEHKKLRTPLN). A helical transmembrane segment spans residues 71 to 93 (YILLNLAVADLFMVIGGFTTTIY). At 94–107 (TSMHGYFVLGRLGC) the chain is on the extracellular side. Cys-107 and Cys-184 are disulfide-bonded. The chain crosses the membrane as a helical span at residues 108–130 (NLEGFSATLGGMIGLWSLVVLAI). The 'Ionic lock' involved in activated form stabilization signature appears at 131–133 (ERW). Topologically, residues 131-149 (ERWVVVCKPMSNFRFGENH) are cytoplasmic. A helical transmembrane segment spans residues 150–170 (AIMGVTLTWVMGLACTVPPLV). At 171 to 199 (GWSRYIPEGMQCSCGIDYYTRAEGFNNDS) the chain is on the extracellular side. Asn-197 carries N-linked (GlcNAc...) asparagine glycosylation. Residues 200 to 221 (YVLYMFVCHFLIPLVVIFFCYG) traverse the membrane as a helical segment. The Cytoplasmic segment spans residues 222 to 249 (RLLCAVKEAAAAQQESETTQRAEREVTR). Residues 250-271 (MVILMVIGFLVCWLPYASVAWY) form a helical membrane-spanning segment. Residues 272-283 (IFTHQGSEFGPL) are Extracellular-facing. The helical transmembrane segment at 284–305 (FMTIPAFFAKSSSIYNPVIYIC) threads the bilayer. Lys-293 is modified (N6-(retinylidene)lysine). Residues 306-349 (MNKQFRQCMLTTLFCGKNPFEEEEGASSTKTEASSASSSSVSPA) are Cytoplasmic-facing. Cys-320 carries the S-palmitoyl cysteine lipid modification. Residues 326 to 349 (EEEEGASSTKTEASSASSSSVSPA) form a disordered region. Low complexity predominate over residues 331–349 (ASSTKTEASSASSSSVSPA).

It belongs to the G-protein coupled receptor 1 family. Opsin subfamily. In terms of processing, phosphorylated on some or all of the serine and threonine residues present in the C-terminal region. Post-translationally, contains one covalently linked retinal chromophore.

Its subcellular location is the membrane. It localises to the cell projection. It is found in the cilium. The protein localises to the photoreceptor outer segment. In terms of biological role, photoreceptor required for image-forming vision at low light intensity. While most salt water fish species use retinal as chromophore, most freshwater fish use 3-dehydroretinal, or a mixture of retinal and 3-dehydroretinal. Light-induced isomerization of 11-cis to all-trans retinal triggers a conformational change that activates signaling via G-proteins. Subsequent receptor phosphorylation mediates displacement of the bound G-protein alpha subunit by arrestin and terminates signaling. The polypeptide is Rhodopsin (rho) (Myripristis violacea (Lattice soldierfish)).